Consider the following 119-residue polypeptide: Fluoride-specific ion channel FluC (119 aa).

4 consecutive transmembrane segments (helical) span residues isoleucine 5–alanine 25, threonine 34–isoleucine 54, tryptophan 59–leucine 79, and isoleucine 97–alanine 117. Residues glycine 69 and threonine 72 each coordinate Na(+).

It belongs to the fluoride channel Fluc/FEX (TC 1.A.43) family.

Its subcellular location is the cell inner membrane. The catalysed reaction is fluoride(in) = fluoride(out). With respect to regulation, na(+) is not transported, but it plays an essential structural role and its presence is essential for fluoride channel function. Functionally, fluoride-specific ion channel. Important for reducing fluoride concentration in the cell, thus reducing its toxicity. In Neisseria meningitidis serogroup C / serotype 2a (strain ATCC 700532 / DSM 15464 / FAM18), this protein is Fluoride-specific ion channel FluC.